The chain runs to 89 residues: MALKVKLVKSFAGASSDMLDTIRGLGLKKFGDERLLKDTPAVRGMAFKVKHLVTLETVSGDAPAPKRRKPAKIALRERAIAYQAKQNKA.

Belongs to the universal ribosomal protein uL30 family. Part of the 50S ribosomal subunit.

The polypeptide is Large ribosomal subunit protein uL30 (Myxococcus xanthus (strain DK1622)).